We begin with the raw amino-acid sequence, 255 residues long: Thiazole synthase (255 aa).

The active-site Schiff-base intermediate with DXP is the K95. 1-deoxy-D-xylulose 5-phosphate is bound by residues G156, 182 to 183 (AG), and 204 to 205 (NT).

Belongs to the ThiG family. Homotetramer. Forms heterodimers with either ThiH or ThiS.

It is found in the cytoplasm. It catalyses the reaction [ThiS sulfur-carrier protein]-C-terminal-Gly-aminoethanethioate + 2-iminoacetate + 1-deoxy-D-xylulose 5-phosphate = [ThiS sulfur-carrier protein]-C-terminal Gly-Gly + 2-[(2R,5Z)-2-carboxy-4-methylthiazol-5(2H)-ylidene]ethyl phosphate + 2 H2O + H(+). It participates in cofactor biosynthesis; thiamine diphosphate biosynthesis. In terms of biological role, catalyzes the rearrangement of 1-deoxy-D-xylulose 5-phosphate (DXP) to produce the thiazole phosphate moiety of thiamine. Sulfur is provided by the thiocarboxylate moiety of the carrier protein ThiS. In vitro, sulfur can be provided by H(2)S. This is Thiazole synthase from Vibrio parahaemolyticus serotype O3:K6 (strain RIMD 2210633).